Reading from the N-terminus, the 251-residue chain is Cytochrome c oxidase subunit 2 (251 aa).

Residues 1–15 (MLDLLRLQLTTFIMN) constitute a propeptide, removed in mature form. At 16–30 (DVPTPYACYFQDSAT) the chain is on the mitochondrial intermembrane side. Residues 31–64 (PNQEGILELHDNIMFYLLVILGLVSWMLYTIVMT) traverse the membrane as a helical segment. Over 65-78 (YSKNPIAYKYIKHG) the chain is Mitochondrial matrix. The chain crosses the membrane as a helical span at residues 79-108 (QTIEVIWTIFPAVILLIIAFPSFILLYLCD). Residues 109 to 251 (EVISPAMTIK…PKFLEWLNEQ (143 aa)) lie on the Mitochondrial intermembrane side of the membrane. Residues His-186, Cys-221, Glu-223, Cys-225, His-229, and Met-232 each contribute to the Cu cation site. Glu-223 lines the Mg(2+) pocket.

It belongs to the cytochrome c oxidase subunit 2 family. Component of the cytochrome c oxidase (complex IV, CIV), a multisubunit enzyme composed of 12 subunits. The complex is composed of a catalytic core of 3 subunits COX1, COX2 and COX3, encoded in the mitochondrial DNA, and 9 supernumerary subunits COX4, COX5A (or COX5B), COX6, COX7, COX8, COX9, COX12, COX13 and COX26, which are encoded in the nuclear genome. The complex exists as a monomer or a dimer and forms supercomplexes (SCs) in the inner mitochondrial membrane with a dimer of ubiquinol-cytochrome c oxidoreductase (cytochrome b-c1 complex, complex III, CIII), resulting in 2 different assemblies (supercomplexes III(2)IV and III(2)IV(2)). The cofactor is Cu cation. The N-terminal sequence of COX2 is processed by IMP1.

It localises to the mitochondrion inner membrane. It carries out the reaction 4 Fe(II)-[cytochrome c] + O2 + 8 H(+)(in) = 4 Fe(III)-[cytochrome c] + 2 H2O + 4 H(+)(out). Component of the cytochrome c oxidase, the last enzyme in the mitochondrial electron transport chain which drives oxidative phosphorylation. The respiratory chain contains 3 multisubunit complexes succinate dehydrogenase (complex II, CII), ubiquinol-cytochrome c oxidoreductase (cytochrome b-c1 complex, complex III, CIII) and cytochrome c oxidase (complex IV, CIV), that cooperate to transfer electrons derived from NADH and succinate to molecular oxygen, creating an electrochemical gradient over the inner membrane that drives transmembrane transport and the ATP synthase. Cytochrome c oxidase is the component of the respiratory chain that catalyzes the reduction of oxygen to water. Electrons originating from reduced cytochrome c in the intermembrane space (IMS) are transferred via the dinuclear copper A center (CU(A)) of COX2 and heme A of COX1 to the active site in COX1, a binuclear center (BNC) formed by heme A3 and copper B (CU(B)). The BNC reduces molecular oxygen to 2 water molecules unsing 4 electrons from cytochrome c in the IMS and 4 protons from the mitochondrial matrix. COX2 is a catalytic core subunit which transfers the electrons from cytochrome c via its dinuclear copper A center (CU(A)) to the BNC of the COX1. This is Cytochrome c oxidase subunit 2 (COX2) from Saccharomyces cerevisiae (strain ATCC 204508 / S288c) (Baker's yeast).